The sequence spans 251 residues: uncharacterized protein (251 aa).

This is an uncharacterized protein from Mycoplasma pneumoniae (strain ATCC 29342 / M129 / Subtype 1) (Mycoplasmoides pneumoniae).